Consider the following 179-residue polypeptide: MNRLKEKYNKEISPALMTKFNYDSVMQVPKIEKIVINMGVGDAVQNAKAIDSAVEELTFIAGQKPVVTRAKKSIAGFRLREGMPIGAKVTLRGERMYDFLDKLISVSLPRVRDFRGISKKSFDGRGNYTLGIKEQLIFPEIDYDKVTKVRGMDIVIVTTANSDEEARELLTQVGMPFQK.

The protein belongs to the universal ribosomal protein uL5 family. As to quaternary structure, part of the 50S ribosomal subunit; part of the 5S rRNA/L5/L18/L25 subcomplex. Contacts the 5S rRNA and the P site tRNA. Forms a bridge to the 30S subunit in the 70S ribosome.

Its function is as follows. This is one of the proteins that bind and probably mediate the attachment of the 5S RNA into the large ribosomal subunit, where it forms part of the central protuberance. In the 70S ribosome it contacts protein S13 of the 30S subunit (bridge B1b), connecting the 2 subunits; this bridge is implicated in subunit movement. Contacts the P site tRNA; the 5S rRNA and some of its associated proteins might help stabilize positioning of ribosome-bound tRNAs. This Bacillus velezensis (strain DSM 23117 / BGSC 10A6 / LMG 26770 / FZB42) (Bacillus amyloliquefaciens subsp. plantarum) protein is Large ribosomal subunit protein uL5.